A 101-amino-acid polypeptide reads, in one-letter code: Integration host factor subunit beta (101 aa).

Residues 62-84 (RNPKTGESVALPGKHVPHFKPGK) form a disordered region.

Belongs to the bacterial histone-like protein family. Heterodimer of an alpha and a beta chain.

Functionally, this protein is one of the two subunits of integration host factor, a specific DNA-binding protein that functions in genetic recombination as well as in transcriptional and translational control. This is Integration host factor subunit beta from Stenotrophomonas maltophilia (strain K279a).